We begin with the raw amino-acid sequence, 138 residues long: Ribosome-binding factor A (138 aa).

A disordered region spans residues 112–138 (EARTQGQEPAADVEPAPGAAPDDEAEE). Positions 119-131 (EPAADVEPAPGAA) are enriched in low complexity.

Belongs to the RbfA family. In terms of assembly, monomer. Binds 30S ribosomal subunits, but not 50S ribosomal subunits or 70S ribosomes.

The protein resides in the cytoplasm. Functionally, one of several proteins that assist in the late maturation steps of the functional core of the 30S ribosomal subunit. Associates with free 30S ribosomal subunits (but not with 30S subunits that are part of 70S ribosomes or polysomes). Required for efficient processing of 16S rRNA. May interact with the 5'-terminal helix region of 16S rRNA. This chain is Ribosome-binding factor A, found in Anaeromyxobacter dehalogenans (strain 2CP-C).